Here is a 630-residue protein sequence, read N- to C-terminus: SHC-transforming protein 4 (630 aa).

The tract at residues 1 to 185 is CH2; it reads MRERGQDSLA…RQDRHFLQHL (185 aa). Disordered stretches follow at residues 39–80 and 118–150; these read TSLD…QESP and KLQE…QQDL. Residues 125–142 show a composition bias toward low complexity; it reads PGSSGPSSPETSLSRSGT. The region spanning 186-369 is the PID domain; the sequence is LGMGMNYCVR…VHIDSHAEER (184 aa). Positions 370-525 are CH1; the sequence is EDHEYYNEIP…HIKQQLWSEE (156 aa). Tyrosine 424 carries the phosphotyrosine modification. 2 stretches are compositionally biased toward polar residues: residues 471-486 and 502-513; these read LQST…SAQP and PGATAQPASSHS. A disordered region spans residues 471–514; the sequence is LQSTPGSAGNQRSAQPLGSPWHCGKAPETVQPGATAQPASSHSL. The region spanning 526–617 is the SH2 domain; that stretch reads CYHGKLSRKA…GSEVSLKQPV (92 aa).

Interacts (via PID domain) with phosphorylated MUSK (via NPXY motif); undergoes tyrosine phosphorylation downstream of activated MUSK. Interacts with GRB2; the interaction is dependent of Tyr-424 phosphorylation and increased by EGF. In terms of processing, phosphorylated; the phosphorylation is enhanced by EGF. Phosphorylation at Tyr-424 is required for the interaction with GRB2. As to expression, only expressed in melanomas. Weakly expressed in normal melanocytes and benign nevi. Highly expressed at the transition from radial growth phase to vertical growth phase and metastatic melanomas, when tumor cells acquire migratory competence and invasive potential.

Its subcellular location is the postsynaptic cell membrane. In terms of biological role, activates both Ras-dependent and Ras-independent migratory pathways in melanomas. Contributes to the early phases of agrin-induced tyrosine phosphorylation of CHRNB1. The chain is SHC-transforming protein 4 (SHC4) from Homo sapiens (Human).